The chain runs to 529 residues: MSVKWTSIILLIQLSFYFSSGSCGKVLVWAAEYSHWMNMKTILEELVQRGHEVTVLASSASILFDPNNSSALKIEVFPTSLTKTEFENIIRQQIKRWSELPKDTFWLYFSQIQEIMWRFGDISIKFCKDVVSNKKLMKKLQESRFDVVLADPIFPCSELLAELFNIPLVYSLRFTPGYVFEKHCGGFLFPPSYVPVVMSELSDQMTFMERVKNMIYVLYFDFCFQLYDMKKWDQFYSEVLGRHTTLSEIMGKADIWLIRNSWNFQFPHPLLPNVDFIGGLLCKPAKPLPKEMEEFVQSSGENGVVVFTLGSMITNMKEERANVIASALAQIPQKVLWRFDGNKPDTLGVNTRLYKWIPQNDLLGHPKTKAFITHGGANGIYEAIYHGVPMVGIPLFADQPDNIAHMKTRGAAVQLDFDTMSSTDLANALKTVINDPLYKENVMKLSRIQRDQPVKPLDRAVFWIEFVMRHKGAKHLRPAAHDLTWFQYHSLDVIGFLLACVATVIFIIMKCCLFCFWKFTRKGKKGKSD.

The N-terminal stretch at 1–24 (MSVKWTSIILLIQLSFYFSSGSCG) is a signal peptide. N-linked (GlcNAc...) asparagine glycosylation is found at Asn-67 and Asn-68. Residues 494–514 (IGFLLACVATVIFIIMKCCLF) traverse the membrane as a helical segment.

Belongs to the UDP-glycosyltransferase family.

It localises to the microsome membrane. The protein resides in the endoplasmic reticulum membrane. It catalyses the reaction glucuronate acceptor + UDP-alpha-D-glucuronate = acceptor beta-D-glucuronoside + UDP + H(+). Its function is as follows. UDPGTs are of major importance in the conjugation and subsequent elimination of potentially toxic xenobiotics and endogenous compounds. This isozyme has glucuronidating capacity on estriol and does not catalyze the glucuronidation of beta-estradiol. Capable of conjugating 4-hydroxyestrone, androsterone, diclofenac, and hyodeoxycholic acid. The chain is UDP-glucuronosyltransferase 2B33 (UGT2B33) from Macaca mulatta (Rhesus macaque).